The primary structure comprises 113 residues: Nucleoid-associated protein Athe_1143 (113 aa).

Belongs to the YbaB/EbfC family. In terms of assembly, homodimer.

The protein resides in the cytoplasm. Its subcellular location is the nucleoid. Binds to DNA and alters its conformation. May be involved in regulation of gene expression, nucleoid organization and DNA protection. The protein is Nucleoid-associated protein Athe_1143 of Caldicellulosiruptor bescii (strain ATCC BAA-1888 / DSM 6725 / KCTC 15123 / Z-1320) (Anaerocellum thermophilum).